The sequence spans 384 residues: Succinyl-diaminopimelate desuccinylase (384 aa).

Histidine 71 contributes to the Zn(2+) binding site. Aspartate 73 is a catalytic residue. Zn(2+) is bound at residue aspartate 104. Glutamate 138 functions as the Proton acceptor in the catalytic mechanism. Positions 139, 167, and 353 each coordinate Zn(2+).

This sequence belongs to the peptidase M20A family. DapE subfamily. In terms of assembly, homodimer. The cofactor is Zn(2+). Requires Co(2+) as cofactor.

It catalyses the reaction N-succinyl-(2S,6S)-2,6-diaminopimelate + H2O = (2S,6S)-2,6-diaminopimelate + succinate. The protein operates within amino-acid biosynthesis; L-lysine biosynthesis via DAP pathway; LL-2,6-diaminopimelate from (S)-tetrahydrodipicolinate (succinylase route): step 3/3. Its function is as follows. Catalyzes the hydrolysis of N-succinyl-L,L-diaminopimelic acid (SDAP), forming succinate and LL-2,6-diaminopimelate (DAP), an intermediate involved in the bacterial biosynthesis of lysine and meso-diaminopimelic acid, an essential component of bacterial cell walls. This chain is Succinyl-diaminopimelate desuccinylase, found in Aromatoleum aromaticum (strain DSM 19018 / LMG 30748 / EbN1) (Azoarcus sp. (strain EbN1)).